Here is a 572-residue protein sequence, read N- to C-terminus: MAFNFNWSPLMADASFYTRAQDLLTAALNKSPKPPIIVDDIIVTELNLGSIPPELEILEIGDLAEDRFRGIFKMSYSGDAFLTLKTRVQANPLNTYLLTRPSFATPLPLAAATPLTIPLQITLSDIKLSGFVILVFSKQKGITVVFRNDPLESLKVSSTFDSIPFVRDFLQKEIEAQLRILFMDELPAIIHRLSLRLWVPEYRAGEDFETQAEKAETANGEGPGQDPLASPPQDPVDALGHALDESDIASLSLDSSVEAHSLFSQKNLLRLAALTDSQRTLSLFTPSIREVVYRAWTSPTDQTDAAGSVTSPVLSRTHSQVGSMSSFQDSASIASMQTRSSTPSHTFSGYGLSLGAGRHSKAHSRKRKKRVVDLRRPKTTDDAPSVSDESAFTESTSAPSVCSAPLPILNEQSDDPVTPPLSPDNDLHLPIIPDRHRMSISRPAPRRDIAAEMMRDMGGPSSTSDPATQATQSEDTSATPRATMRAQIPSIYLNEKQDAGSSTGVPRQLPSAILPFLNDNPMNRVVDQALVERLAGEIARRMRDEKFMATNACGSFWDRHSQEESPPPAYGH.

Residues 1 to 195 (MAFNFNWSPL…LPAIIHRLSL (195 aa)) form the SMP-LTD domain. 3 disordered regions span residues 210–239 (TQAE…VDAL), 330–423 (SASI…PLSP), and 455–482 (RDMG…TPRA). Polar residues predominate over residues 330-347 (SASIASMQTRSSTPSHTF). The span at 358 to 370 (RHSKAHSRKRKKR) shows a compositional bias: basic residues. The segment covering 371–381 (VVDLRRPKTTD) has biased composition (basic and acidic residues). Composition is skewed to polar residues over residues 387–400 (SDES…SAPS) and 460–480 (PSST…SATP).

It belongs to the MDM34 family. As to quaternary structure, component of the ER-mitochondria encounter structure (ERMES) or MDM complex, composed of mmm1, mdm10, mdm12 and mdm34.

It localises to the mitochondrion outer membrane. Component of the ERMES/MDM complex, which serves as a molecular tether to connect the endoplasmic reticulum (ER) and mitochondria. Components of this complex are involved in the control of mitochondrial shape and protein biogenesis, and function in nonvesicular lipid trafficking between the ER and mitochondria. Mdm34 is required for the interaction of the ER-resident membrane protein mmm1 and the outer mitochondrial membrane-resident beta-barrel protein mdm10. This is Mitochondrial distribution and morphology protein 34 from Aspergillus clavatus (strain ATCC 1007 / CBS 513.65 / DSM 816 / NCTC 3887 / NRRL 1 / QM 1276 / 107).